Consider the following 174-residue polypeptide: Glutamyl-tRNA(Gln) amidotransferase subunit F, mitochondrial (174 aa).

The protein belongs to the GatF family. Subunit of the heterotrimeric GatFAB amidotransferase (AdT) complex, composed of A, B and F subunits.

Its subcellular location is the mitochondrion inner membrane. It catalyses the reaction L-glutamyl-tRNA(Gln) + L-glutamine + ATP + H2O = L-glutaminyl-tRNA(Gln) + L-glutamate + ADP + phosphate + H(+). Its function is as follows. Allows the formation of correctly charged Gln-tRNA(Gln) through the transamidation of misacylated Glu-tRNA(Gln) in the mitochondria. The reaction takes place in the presence of glutamine and ATP through an activated gamma-phospho-Glu-tRNA(Gln). Required for proper protein synthesis within the mitochondrion. In Kluyveromyces lactis (strain ATCC 8585 / CBS 2359 / DSM 70799 / NBRC 1267 / NRRL Y-1140 / WM37) (Yeast), this protein is Glutamyl-tRNA(Gln) amidotransferase subunit F, mitochondrial.